Here is a 102-residue protein sequence, read N- to C-terminus: Large ribosomal subunit protein bL21 (102 aa).

It belongs to the bacterial ribosomal protein bL21 family. In terms of assembly, part of the 50S ribosomal subunit. Contacts protein L20.

This protein binds to 23S rRNA in the presence of protein L20. This is Large ribosomal subunit protein bL21 from Geotalea daltonii (strain DSM 22248 / JCM 15807 / FRC-32) (Geobacter daltonii).